The sequence spans 296 residues: Large ribosomal subunit protein uL29m (296 aa).

A mitochondrion-targeting transit peptide spans 1 to 19 (MSITSIRALLRSAVSLART).

Belongs to the universal ribosomal protein uL29 family. Component of the mitochondrial large ribosomal subunit. Mature mitochondrial ribosomes consist of a small (37S) and a large (54S) subunit. The 37S subunit contains at least 33 different proteins and 1 molecule of RNA (15S). The 54S subunit contains at least 45 different proteins and 1 molecule of RNA (21S).

It is found in the mitochondrion. The polypeptide is Large ribosomal subunit protein uL29m (MRPL4) (Lodderomyces elongisporus (strain ATCC 11503 / CBS 2605 / JCM 1781 / NBRC 1676 / NRRL YB-4239) (Yeast)).